Consider the following 379-residue polypeptide: Pathogen-associated molecular patterns-induced protein A70 (379 aa).

A helical transmembrane segment spans residues 7-29 (VASFFTPTTLFLLLNLMIGTIVV). Residue N122 is glycosylated (N-linked (GlcNAc...) asparagine). Residues 133-154 (TGSDPHSHSHSHLDLHPDPAPA) form a disordered region. Residues 137-149 (PHSHSHSHLDLHP) are compositionally biased toward basic and acidic residues. N-linked (GlcNAc...) asparagine glycosylation is present at N170. 2 disordered regions span residues 216-238 (PEED…LTRA) and 256-347 (SDPD…DGVD). The segment covering 221–231 (PTGTGVNSQIN) has biased composition (polar residues). 2 stretches are compositionally biased toward basic and acidic residues: residues 256 to 285 (SDPD…ESKK) and 322 to 335 (SLER…RVER).

It is found in the membrane. The sequence is that of Pathogen-associated molecular patterns-induced protein A70 from Arabidopsis thaliana (Mouse-ear cress).